A 151-amino-acid polypeptide reads, in one-letter code: Small ribosomal subunit protein uS11 (151 aa).

The disordered stretch occupies residues 129–151 (IEDVTPVPSDSTRRKGGRRGRRL). Residues 142 to 151 (RKGGRRGRRL) show a composition bias toward basic residues.

The protein belongs to the universal ribosomal protein uS11 family.

This Procambarus clarkii (Red swamp crayfish) protein is Small ribosomal subunit protein uS11 (RPS14).